We begin with the raw amino-acid sequence, 145 residues long: 3-hydroxyacyl-[acyl-carrier-protein] dehydratase FabZ (145 aa).

Residue histidine 50 is part of the active site.

The protein belongs to the thioester dehydratase family. FabZ subfamily.

The protein localises to the cytoplasm. It carries out the reaction a (3R)-hydroxyacyl-[ACP] = a (2E)-enoyl-[ACP] + H2O. Involved in unsaturated fatty acids biosynthesis. Catalyzes the dehydration of short chain beta-hydroxyacyl-ACPs and long chain saturated and unsaturated beta-hydroxyacyl-ACPs. This Coxiella burnetii (strain CbuK_Q154) (Coxiella burnetii (strain Q154)) protein is 3-hydroxyacyl-[acyl-carrier-protein] dehydratase FabZ.